The sequence spans 258 residues: MILVFDVGNTNIVLGVYEQKDLIYHWRISTDKSRTVDEYAVIIKNLFDLNGLDMSRIKAVVMSSVVPPVMPTLESLARKYFDVEPLVIGPGVKTGMPIVYDNPREVGADRIVNAVAAYHKYGGPLVIVDFGTATTFCAISKRGEYLGGAIAPGVGISTEALFQRASKLPRIEIVKPKSIIAKNTVAGMQSGIYYGYTGQVDRIVTLMKQELGRDTRVIATGGLAELIQEDSQEIETVDPFLTLEGLLLIYERNSNQQP.

6-13 (DVGNTNIV) contributes to the ATP binding site. Substrate is bound by residues Y100 and 107–110 (GADR). Residue D109 is the Proton acceptor of the active site. A K(+)-binding site is contributed by D129. Position 132 (T132) interacts with ATP. Substrate is bound at residue T184.

Belongs to the type III pantothenate kinase family. In terms of assembly, homodimer. The cofactor is NH4(+). Requires K(+) as cofactor.

It localises to the cytoplasm. The enzyme catalyses (R)-pantothenate + ATP = (R)-4'-phosphopantothenate + ADP + H(+). The protein operates within cofactor biosynthesis; coenzyme A biosynthesis; CoA from (R)-pantothenate: step 1/5. Functionally, catalyzes the phosphorylation of pantothenate (Pan), the first step in CoA biosynthesis. The protein is Type III pantothenate kinase of Desulfitobacterium hafniense (strain DSM 10664 / DCB-2).